A 110-amino-acid chain; its full sequence is MSSQIIDRPKHELSRAELEELEEFEFKHGPMSLINDAMVTRTPVIISLRNNHKIIARVKAFDRHCNMVLENVKELWTEKKGKNVINRERFISKLFLRGDSVIVVLKTPVE.

The 80-residue stretch at 31–110 (MSLINDAMVT…VIVVLKTPVE (80 aa)) folds into the Sm domain.

Belongs to the snRNP core protein family. In terms of assembly, component of the Sm core complex, present in spliceosomal snRNP U1, U2, U4/U6 and U5. The core complex contains SMB1, SMD1, SMD2, SMD3, SME1, SMX3 and SMX2 (Sm proteins B, D1, D2, D3, E, F and G, respectively), and is probably a heptameric ring structure. Belongs to the CWC complex (or CEF1-associated complex), a spliceosome sub-complex reminiscent of a late-stage spliceosome composed of the U2, U5 and U6 snRNAs and at least BUD13, BUD31, BRR2, CDC40, CEF1, CLF1, CUS1, CWC2, CWC15, CWC21, CWC22, CWC23, CWC24, CWC25, CWC27, ECM2, HSH155, IST3, ISY1, LEA1, MSL1, NTC20, PRP8, PRP9, PRP11, PRP19, PRP21, PRP22, PRP45, PRP46, SLU7, SMB1, SMD1, SMD2, SMD3, SMX2, SMX3, SNT309, SNU114, SPP2, SYF1, SYF2, RSE1 and YJU2. Component of the U4/U6-U5 tri-snRNP complex composed of the U4, U6 and U5 snRNAs and at least PRP3, PRP4, PRP6, PRP8, PRP18, PRP31, PRP38, SNU13, SNU23, SNU66, SNU114, SPP381, SMB1, SMD1, SMD2, SMD3, SMX2, SMX3, LSM2, LSM3, LSM4, LSM5, LSM6, LSM7, LSM8, BRR2 and DIB1.

Its subcellular location is the nucleus. It is found in the cytoplasm. The protein localises to the cytosol. Its function is as follows. Plays a role in pre-mRNA splicing as a core component of the spliceosomal U1, U2, U4 and U5 small nuclear ribonucleoproteins (snRNPs), the building blocks of the spliceosome. The chain is Small nuclear ribonucleoprotein Sm D2 (SMD2) from Saccharomyces cerevisiae (strain ATCC 204508 / S288c) (Baker's yeast).